A 61-amino-acid polypeptide reads, in one-letter code: Acetylcholinesterase toxin C (61 aa).

4 disulfide bridges follow: C3-C22, C17-C39, C41-C52, and C53-C59.

The protein belongs to the three-finger toxin family. Short-chain subfamily. Acn-esterase inhibitor sub-subfamily. Expressed by the venom gland.

Its subcellular location is the secreted. In terms of biological role, inhibits acetylcholinesterase. In Dendroaspis polylepis polylepis (Black mamba), this protein is Acetylcholinesterase toxin C.